Here is a 225-residue protein sequence, read N- to C-terminus: Methylthioribulose-1-phosphate dehydratase (225 aa).

2 residues coordinate Zn(2+): H106 and H108.

The protein belongs to the aldolase class II family. MtnB subfamily. Zn(2+) serves as cofactor.

The enzyme catalyses 5-(methylsulfanyl)-D-ribulose 1-phosphate = 5-methylsulfanyl-2,3-dioxopentyl phosphate + H2O. It participates in amino-acid biosynthesis; L-methionine biosynthesis via salvage pathway; L-methionine from S-methyl-5-thio-alpha-D-ribose 1-phosphate: step 2/6. Functionally, catalyzes the dehydration of methylthioribulose-1-phosphate (MTRu-1-P) into 2,3-diketo-5-methylthiopentyl-1-phosphate (DK-MTP-1-P). In Xanthomonas oryzae pv. oryzae (strain KACC10331 / KXO85), this protein is Methylthioribulose-1-phosphate dehydratase.